A 404-amino-acid chain; its full sequence is Proteasomal ubiquitin receptor ADRM1-B (404 aa).

Residues 17–130 (SSSKYLVEFR…RKVNEYLNNP (114 aa)) enclose the Pru domain. Disordered stretches follow at residues 128–149 (NNPP…LSAL), 195–258 (GSGG…TSPT), and 376–404 (FAKA…MSLD). Over residues 195 to 247 (GSGGPTTSSSSSSSRSQSAAVTPSSTTSSTRTTSAPVAPAAAPATTPSPAVSS) the composition is skewed to low complexity. Polar residues predominate over residues 248-258 (NDGASAATSPT). A DEUBAD domain is found at 278–390 (TGEGGQQVDL…QSTSSQKERE (113 aa)). The segment covering 386–395 (QKERESSEKK) has biased composition (basic and acidic residues).

The protein belongs to the ADRM1 family. Component of the 19S proteasome regulatory particle complex. The 26S proteasome consists of a 20S core particle (CP) and two 19S regulatory subunits (RP).

Its subcellular location is the cytoplasm. The protein resides in the nucleus. In terms of biological role, component of the 26S proteasome, a multiprotein complex involved in the ATP-dependent degradation of ubiquitinated proteins. This complex plays a key role in the maintenance of protein homeostasis by removing misfolded or damaged proteins, which could impair cellular functions, and by removing proteins whose functions are no longer required. Therefore, the proteasome participates in numerous cellular processes, including cell cycle progression, apoptosis, or DNA damage repair. Within the complex, functions as a proteasomal ubiquitin receptor. This chain is Proteasomal ubiquitin receptor ADRM1-B (adrm1-b), found in Xenopus laevis (African clawed frog).